A 275-amino-acid polypeptide reads, in one-letter code: Probable CCR4-associated factor 1 homolog 7 (275 aa).

Residues aspartate 40, glutamate 42, aspartate 167, and aspartate 236 each contribute to the a divalent metal cation site.

It belongs to the CAF1 family. In terms of assembly, component of the CCR4-NOT complex, at least composed of CRR4 and CAF1 proteins. The cofactor is a divalent metal cation.

It localises to the nucleus. It is found in the cytoplasm. The enzyme catalyses Exonucleolytic cleavage of poly(A) to 5'-AMP.. In terms of biological role, ubiquitous transcription factor required for a diverse set of processes. It is a component of the CCR4 complex involved in the control of gene expression. The chain is Probable CCR4-associated factor 1 homolog 7 (CAF1-7) from Arabidopsis thaliana (Mouse-ear cress).